We begin with the raw amino-acid sequence, 1088 residues long: DNA polymerase delta catalytic subunit (1088 aa).

The protein belongs to the DNA polymerase type-B family. As to quaternary structure, heterodimer with subunits of 125 kDa and 50 kDa. The 125 kDa subunit contains the polymerase active site and most likely the active site for the 3'-5' exonuclease activity.

The protein resides in the nucleus. It catalyses the reaction DNA(n) + a 2'-deoxyribonucleoside 5'-triphosphate = DNA(n+1) + diphosphate. In terms of biological role, this polymerase possesses two enzymatic activities: DNA synthesis (polymerase) and an exonucleolytic activity that degrades single-stranded DNA in the 3'- to 5'-direction. The protein is DNA polymerase delta catalytic subunit (POLD1) of Glycine max (Soybean).